Reading from the N-terminus, the 422-residue chain is Probable zinc-type alcohol dehydrogenase-like protein L498 (422 aa).

Cysteine 108, histidine 129, cysteine 160, cysteine 163, cysteine 166, cysteine 174, and cysteine 231 together coordinate Zn(2+).

Requires Zn(2+) as cofactor.

It localises to the host cytoplasm. It is found in the virion. The sequence is that of Probable zinc-type alcohol dehydrogenase-like protein L498 from Acanthamoeba polyphaga (Amoeba).